The following is a 70-amino-acid chain: DNA-directed RNA polymerase subunit epsilon (70 aa).

The protein belongs to the RNA polymerase subunit epsilon family. RNAP is composed of a core of 2 alpha, a beta and a beta' subunit. The core is associated with a delta subunit, and at least one of epsilon or omega. When a sigma factor is associated with the core the holoenzyme is formed, which can initiate transcription.

The catalysed reaction is RNA(n) + a ribonucleoside 5'-triphosphate = RNA(n+1) + diphosphate. A non-essential component of RNA polymerase (RNAP). This chain is DNA-directed RNA polymerase subunit epsilon, found in Latilactobacillus sakei subsp. sakei (strain 23K) (Lactobacillus sakei subsp. sakei).